The chain runs to 207 residues: MSTIIMDLCSYTRLGLSGYLVSRGVKKREINDIETVDELAIACGAHQPSVVFINEDCFIHTPSDSQQIKQIINQHPDTLFIVFMAIANVHFDEYLLVRKNLLISSKSIKPDSLDTLLGDILKKESGISGTINLPTLSLSRTESSMLRMWMEGQGTIQISDRMNIKAKTVSSHKGNIKRKIKTHNKQVIYHVVRLTDNVTNGIFVNMR.

The 66-residue stretch at 131–196 (INLPTLSLSR…VIYHVVRLTD (66 aa)) folds into the HTH luxR-type domain. A DNA-binding region (H-T-H motif) is located at residues 155–174 (TIQISDRMNIKAKTVSSHKG).

Belongs to the RcsA family. Interacts with RcsB.

Functionally, component of the Rcs signaling system, which controls transcription of numerous genes. Binds, with RcsB, to the RcsAB box to regulate expression of genes. In Salmonella typhimurium (strain LT2 / SGSC1412 / ATCC 700720), this protein is Transcriptional regulatory protein RcsA.